A 116-amino-acid polypeptide reads, in one-letter code: Flagellar transcriptional regulator FlhD (116 aa).

The protein belongs to the FlhD family. Homodimer; disulfide-linked. Forms a heterohexamer composed of two FlhC and four FlhD subunits. Each FlhC binds a FlhD dimer, forming a heterotrimer, and a hexamer assembles by dimerization of two heterotrimers.

The protein resides in the cytoplasm. In terms of biological role, functions in complex with FlhC as a master transcriptional regulator that regulates transcription of several flagellar and non-flagellar operons by binding to their promoter region. Activates expression of class 2 flagellar genes, including fliA, which is a flagellum-specific sigma factor that turns on the class 3 genes. Also regulates genes whose products function in a variety of physiological pathways. In Escherichia coli O9:H4 (strain HS), this protein is Flagellar transcriptional regulator FlhD.